We begin with the raw amino-acid sequence, 128 residues long: Small ribosomal subunit protein uS14m (128 aa).

It belongs to the universal ribosomal protein uS14 family. As to quaternary structure, component of the mitochondrial small ribosomal subunit (mt-SSU). Mature mammalian 55S mitochondrial ribosomes consist of a small (28S) and a large (39S) subunit. The 28S small subunit contains a 12S ribosomal RNA (12S mt-rRNA) and 30 different proteins. The 39S large subunit contains a 16S rRNA (16S mt-rRNA), a copy of mitochondrial valine transfer RNA (mt-tRNA(Val)), which plays an integral structural role, and 52 different proteins. Interacts with LIAT1.

It is found in the mitochondrion. This Homo sapiens (Human) protein is Small ribosomal subunit protein uS14m.